The following is a 395-amino-acid chain: Acetate kinase 2 (395 aa).

Position 8 (asparagine 8) interacts with Mg(2+). Lysine 15 is an ATP binding site. Arginine 89 lines the substrate pocket. Catalysis depends on aspartate 146, which acts as the Proton donor/acceptor. Residues histidine 206–glycine 210, aspartate 283–arginine 285, and glycine 331–asparagine 335 contribute to the ATP site. Mg(2+) is bound at residue glutamate 383.

This sequence belongs to the acetokinase family. In terms of assembly, homodimer. The cofactor is Mg(2+). Mn(2+) serves as cofactor.

It localises to the cytoplasm. The catalysed reaction is acetate + ATP = acetyl phosphate + ADP. It participates in metabolic intermediate biosynthesis; acetyl-CoA biosynthesis; acetyl-CoA from acetate: step 1/2. Its function is as follows. Catalyzes the formation of acetyl phosphate from acetate and ATP. Can also catalyze the reverse reaction. The polypeptide is Acetate kinase 2 (Lactococcus lactis subsp. lactis (strain IL1403) (Streptococcus lactis)).